The chain runs to 259 residues: Phosphate import ATP-binding protein PstB (259 aa).

Positions 5–248 (IDVSGLHVYY…NKIFTKPEKK (244 aa)) constitute an ABC transporter domain. Position 37–44 (37–44 (GSSGCGKS)) interacts with ATP.

This sequence belongs to the ABC transporter superfamily. Phosphate importer (TC 3.A.1.7) family. As to quaternary structure, the complex is composed of two ATP-binding proteins (PstB), two transmembrane proteins (PstC and PstA) and a solute-binding protein (PstS).

It localises to the cell membrane. It carries out the reaction phosphate(out) + ATP + H2O = ADP + 2 phosphate(in) + H(+). Its function is as follows. Part of the ABC transporter complex PstSACB involved in phosphate import. Responsible for energy coupling to the transport system. The protein is Phosphate import ATP-binding protein PstB of Thermobifida fusca (strain YX).